A 477-amino-acid polypeptide reads, in one-letter code: Protein kinase C and casein kinase substrate in neurons protein 2 (477 aa).

In terms of domain architecture, F-BAR spans 11–282 (VEVSSDSFWE…AIKSADAMED (272 aa)). The stretch at 25 to 274 (KRTVKRIDDG…SIYRELEYAI (250 aa)) forms a coiled coil. Composition is skewed to basic and acidic residues over residues 163–176 (CKEE…ETNS) and 186–216 (QLKK…KDLD). Disordered regions lie at residues 163-218 (CKEE…LDGT) and 314-412 (RREK…PFDE). Low complexity predominate over residues 328–341 (GISQSGEQSSIQNQ). Positions 342–357 (HSSHLSVQSAQSTNNP) are enriched in polar residues. An NPF1 motif is present at residues 356–358 (NPF). Residues 370-388 (TENKKIENVGSYEKTHPAE) show a composition bias toward basic and acidic residues. The span at 395–407 (NNPFNPSDTNGDN) shows a compositional bias: polar residues. The NPF2 motif lies at 396–398 (NPF). The short motif at 408–410 (NPF) is the NPF3 element. Residues 417–477 (TLEVRVRALY…YPANYVESVQ (61 aa)) enclose the SH3 domain.

This sequence belongs to the PACSIN family. Interacts with adam13 through the SH3 domains. Post-translationally, phosphorylated. In terms of tissue distribution, ubiquitously expressed with higher expression in the ectoderm, the neuroectoderm, and dorsal mesoderm layers.

The protein resides in the cytoplasm. Its subcellular location is the cytoskeleton. The protein localises to the cytoplasmic vesicle membrane. It is found in the cell projection. It localises to the ruffle membrane. The protein resides in the early endosome. Its subcellular location is the recycling endosome membrane. The protein localises to the cell membrane. It is found in the membrane. It localises to the caveola. The protein resides in the cell junction. Its subcellular location is the adherens junction. Regulates the morphogenesis and endocytosis of caveolae. Lipid-binding protein that is able to promote the tubulation of the phosphatidic acid-containing membranes it preferentially binds. Plays a role in intracellular vesicle-mediated transport. Involved in the endocytosis of cell-surface receptors like the EGF receptor, contributing to its internalization in the absence of EGF stimulus. This Xenopus laevis (African clawed frog) protein is Protein kinase C and casein kinase substrate in neurons protein 2 (pacsin2).